The primary structure comprises 473 residues: 3-isopropylmalate dehydratase large subunit (473 aa).

Positions 349, 409, and 412 each coordinate [4Fe-4S] cluster.

This sequence belongs to the aconitase/IPM isomerase family. LeuC type 1 subfamily. As to quaternary structure, heterodimer of LeuC and LeuD. The cofactor is [4Fe-4S] cluster.

The enzyme catalyses (2R,3S)-3-isopropylmalate = (2S)-2-isopropylmalate. Its pathway is amino-acid biosynthesis; L-leucine biosynthesis; L-leucine from 3-methyl-2-oxobutanoate: step 2/4. In terms of biological role, catalyzes the isomerization between 2-isopropylmalate and 3-isopropylmalate, via the formation of 2-isopropylmaleate. This Gloeobacter violaceus (strain ATCC 29082 / PCC 7421) protein is 3-isopropylmalate dehydratase large subunit.